The sequence spans 117 residues: Ribonuclease P protein component 4 (117 aa).

4 residues coordinate Zn(2+): cysteine 63, cysteine 66, cysteine 92, and cysteine 95.

The protein belongs to the eukaryotic/archaeal RNase P protein component 4 family. As to quaternary structure, consists of a catalytic RNA component and at least 4 protein subunits. Forms a subcomplex with Rnp1 which stimulates the catalytic RNA. Requires Zn(2+) as cofactor.

It is found in the cytoplasm. The catalysed reaction is Endonucleolytic cleavage of RNA, removing 5'-extranucleotides from tRNA precursor.. In terms of biological role, part of ribonuclease P, a protein complex that generates mature tRNA molecules by cleaving their 5'-ends. The RNA is catalytic, but its KM for pre-tRNA is 170-fold decreased in the presence of the 4 known protein subunits (Rnp1-4). The protein subunits also decrease the amount of Mg(2+) needed for activity. This is Ribonuclease P protein component 4 from Pyrococcus furiosus (strain ATCC 43587 / DSM 3638 / JCM 8422 / Vc1).